We begin with the raw amino-acid sequence, 886 residues long: Alanine--tRNA ligase (886 aa).

Residues H564, H568, C666, and H670 each coordinate Zn(2+).

This sequence belongs to the class-II aminoacyl-tRNA synthetase family. Zn(2+) serves as cofactor.

It is found in the cytoplasm. The enzyme catalyses tRNA(Ala) + L-alanine + ATP = L-alanyl-tRNA(Ala) + AMP + diphosphate. Its function is as follows. Catalyzes the attachment of alanine to tRNA(Ala) in a two-step reaction: alanine is first activated by ATP to form Ala-AMP and then transferred to the acceptor end of tRNA(Ala). Also edits incorrectly charged Ser-tRNA(Ala) and Gly-tRNA(Ala) via its editing domain. This Prochlorococcus marinus subsp. pastoris (strain CCMP1986 / NIES-2087 / MED4) protein is Alanine--tRNA ligase.